Reading from the N-terminus, the 213-residue chain is MKKLLYISVNTKPEEMSSSKTVARKLINSILEKHPSMALEEVDLYREHIPQLKYSYFESRSAIVNSEALAKLPQDEQNEVTQIIKLCDQFRAADIYIIASPMWSLSFPAPLKEYIDCVVQSGKTIAFDENKPYGLLNDKERTFIYVQSSGANIPWIIRPALNKGLNYVHDIIRFLGISKFEELLVDGTGTTELERQEAIEKAASRIETLVDQI.

An FMN-binding site is contributed by 17-19 (SSS).

This sequence belongs to the azoreductase type 1 family. As to quaternary structure, homodimer. The cofactor is FMN.

The catalysed reaction is 2 a quinone + NADH + H(+) = 2 a 1,4-benzosemiquinone + NAD(+). The enzyme catalyses N,N-dimethyl-1,4-phenylenediamine + anthranilate + 2 NAD(+) = 2-(4-dimethylaminophenyl)diazenylbenzoate + 2 NADH + 2 H(+). In terms of biological role, quinone reductase that provides resistance to thiol-specific stress caused by electrophilic quinones. Also exhibits azoreductase activity. Catalyzes the reductive cleavage of the azo bond in aromatic azo compounds to the corresponding amines. In Ruminiclostridium cellulolyticum (strain ATCC 35319 / DSM 5812 / JCM 6584 / H10) (Clostridium cellulolyticum), this protein is FMN-dependent NADH:quinone oxidoreductase.